The chain runs to 472 residues: MADTNNKLKSGLGKITQIIGAVLDIKFAEGKLPEIYEAIKIKKNDGDTLVVEVAQHLGDDTVRCIAMGPTDGLVRGMDAEGTGAPISVPVGENTLGRMFNVLGNPIDEKEAPKNVEYYPIHRKAPAFEEQSTQTEILETGIKVVDLLCPYQKGGKIGLFGGAGVGKTVLIQELITNIATEHGGYSVFTGVGERTREGNDLYYEMIDSGVINKTTMVFGQMNEPPGARMRVGLTGLTMAEYFRDKSGKDVLLFIDNIFRFTQAGSEVSALLGRMPSAVGYQPTLQTEMGALQERITSTKNGSITSVQAVYVPADDLTDPAPATTFAHLDATTVLSRSIVELGIYPAVDPLESTSRMLDPRVVGEEHYKVARDVQEILQRYKELQDIIAILGMDELSEDDKLLVARARKIQRFLSQPFHVAEQFTGLPGRYVPVAETIQGFKEIIEGKHDDIPESYFLNAGNIDDVLARVKANK.

160–167 (GGAGVGKT) lines the ATP pocket.

It belongs to the ATPase alpha/beta chains family. F-type ATPases have 2 components, CF(1) - the catalytic core - and CF(0) - the membrane proton channel. CF(1) has five subunits: alpha(3), beta(3), gamma(1), delta(1), epsilon(1). CF(0) has three main subunits: a(1), b(2) and c(9-12). The alpha and beta chains form an alternating ring which encloses part of the gamma chain. CF(1) is attached to CF(0) by a central stalk formed by the gamma and epsilon chains, while a peripheral stalk is formed by the delta and b chains.

The protein resides in the cell membrane. It catalyses the reaction ATP + H2O + 4 H(+)(in) = ADP + phosphate + 5 H(+)(out). Produces ATP from ADP in the presence of a proton gradient across the membrane. The catalytic sites are hosted primarily by the beta subunits. The sequence is that of ATP synthase subunit beta from Lachnoclostridium phytofermentans (strain ATCC 700394 / DSM 18823 / ISDg) (Clostridium phytofermentans).